The chain runs to 142 residues: MSYSNILVAVAVTPESQQLLAKAVSIARPVKGHISLITLASDPEMYNQLAAPMLEDLRNVMQEETQSFLDKLIQDAGYPVDKTFIAYGELSEHILEVCRKHHFDLVICGNHNHSFFSRASCSAKRVITSSEVDVLLVPLTGD.

This sequence belongs to the universal stress protein A family.

It localises to the cytoplasm. Functionally, required for resistance to DNA-damaging agents. The protein is Universal stress protein C (uspC) of Escherichia coli O6:H1 (strain CFT073 / ATCC 700928 / UPEC).